Here is a 181-residue protein sequence, read N- to C-terminus: I-Kappa-B like protein C2 (181 aa).

ANK repeat units lie at residues 54–86 (DGKX…DINS), 91–121 (DGNT…DMEI), and 125–154 (ARKT…RCDV).

Belongs to the polydnaviridae I-Kappa-B-like protein family.

In terms of biological role, suppresses the host immune response through NF-kappa-B inactivation. Possesses ankyrin repeat domains required for NF-kappa-B binding but lacks the regulatory regions required for dissociation from NF-kappa-B and degradation. Therefore, prevents host NF-kappa-B release and subsequent activation. This is I-Kappa-B like protein C2 (C2) from Microplitis demolitor (Parasitoid wasp).